The following is a 737-amino-acid chain: Phosphoribosylformylglycinamidine synthase subunit PurL (737 aa).

The active site involves histidine 48. 2 residues coordinate ATP: tyrosine 51 and lysine 90. Glutamate 92 is a Mg(2+) binding site. Substrate is bound by residues 93 to 96 (SHNH) and arginine 115. Catalysis depends on histidine 94, which acts as the Proton acceptor. Aspartate 116 serves as a coordination point for Mg(2+). Glutamine 244 serves as a coordination point for substrate. Position 272 (aspartate 272) interacts with Mg(2+). Substrate is bound at residue 316–318 (ESQ). Residues aspartate 500 and glycine 537 each coordinate ATP. Asparagine 538 provides a ligand contact to Mg(2+). Serine 540 lines the substrate pocket.

Belongs to the FGAMS family. In terms of assembly, monomer. Part of the FGAM synthase complex composed of 1 PurL, 1 PurQ and 2 PurS subunits.

It localises to the cytoplasm. The catalysed reaction is N(2)-formyl-N(1)-(5-phospho-beta-D-ribosyl)glycinamide + L-glutamine + ATP + H2O = 2-formamido-N(1)-(5-O-phospho-beta-D-ribosyl)acetamidine + L-glutamate + ADP + phosphate + H(+). Its pathway is purine metabolism; IMP biosynthesis via de novo pathway; 5-amino-1-(5-phospho-D-ribosyl)imidazole from N(2)-formyl-N(1)-(5-phospho-D-ribosyl)glycinamide: step 1/2. Part of the phosphoribosylformylglycinamidine synthase complex involved in the purines biosynthetic pathway. Catalyzes the ATP-dependent conversion of formylglycinamide ribonucleotide (FGAR) and glutamine to yield formylglycinamidine ribonucleotide (FGAM) and glutamate. The FGAM synthase complex is composed of three subunits. PurQ produces an ammonia molecule by converting glutamine to glutamate. PurL transfers the ammonia molecule to FGAR to form FGAM in an ATP-dependent manner. PurS interacts with PurQ and PurL and is thought to assist in the transfer of the ammonia molecule from PurQ to PurL. This is Phosphoribosylformylglycinamidine synthase subunit PurL from Sulfurimonas denitrificans (strain ATCC 33889 / DSM 1251) (Thiomicrospira denitrificans (strain ATCC 33889 / DSM 1251)).